Here is a 705-residue protein sequence, read N- to C-terminus: Elongation factor G (705 aa).

The region spanning 8–294 is the tr-type G domain; that stretch reads DRYRNFGIMA…AVIDYLPSPL (287 aa). Residues 17–24, 92–96, and 146–149 each bind GTP; these read AHIDAGKT, DTPGH, and NKMD.

It belongs to the TRAFAC class translation factor GTPase superfamily. Classic translation factor GTPase family. EF-G/EF-2 subfamily.

It localises to the cytoplasm. Its function is as follows. Catalyzes the GTP-dependent ribosomal translocation step during translation elongation. During this step, the ribosome changes from the pre-translocational (PRE) to the post-translocational (POST) state as the newly formed A-site-bound peptidyl-tRNA and P-site-bound deacylated tRNA move to the P and E sites, respectively. Catalyzes the coordinated movement of the two tRNA molecules, the mRNA and conformational changes in the ribosome. The chain is Elongation factor G from Dinoroseobacter shibae (strain DSM 16493 / NCIMB 14021 / DFL 12).